The sequence spans 563 residues: Germacrene-A synthase (563 aa).

Mg(2+)-binding residues include Asp-316, Asp-320, Asp-461, and Glu-469. A DDXXD motif motif is present at residues 316–320 (DDIYD).

This sequence belongs to the terpene synthase family. Tpsa subfamily. Mg(2+) is required as a cofactor. Expressed in young leaves. Detected in trichomes and cones.

The catalysed reaction is (2E,6E)-farnesyl diphosphate = (+)-(R)-germacrene A + diphosphate. It functions in the pathway secondary metabolite biosynthesis; terpenoid biosynthesis. Functionally, sesquiterpene synthase that catalyzes the formation of germacrene A. Can use farnesyl diphosphate as substrate, but not geranyl diphosphate or geranylgeranyl diphosphate. Beta-elemene, the initially measured product in the assay, is derived nonenzymatically from germacrene A. This chain is Germacrene-A synthase, found in Humulus lupulus (European hop).